Here is a 369-residue protein sequence, read N- to C-terminus: D-glucosaminate-6-phosphate ammonia lyase (369 aa).

K213 bears the N6-(pyridoxal phosphate)lysine mark.

Belongs to the SelA family. Pyridoxal 5'-phosphate is required as a cofactor.

It catalyses the reaction 2-amino-2-deoxy-D-gluconate 6-phosphate = 2-dehydro-3-deoxy-6-phospho-D-gluconate + NH4(+). Functionally, involved in the catabolism of D-glucosaminate. Catalyzes the conversion of D-glucosaminate 6-phosphate to yield keto-3-deoxygluconate 6-phosphate (KDGP). This is D-glucosaminate-6-phosphate ammonia lyase from Salmonella typhimurium (strain 14028s / SGSC 2262).